A 38-amino-acid chain; its full sequence is Kappa-theraphotoxin-Hm2a (38 aa).

3 disulfides stabilise this stretch: cysteine 2–cysteine 16, cysteine 9–cysteine 21, and cysteine 15–cysteine 32. The residue at position 38 (phenylalanine 38) is a Phenylalanine amide.

This sequence belongs to the neurotoxin 10 (Hwtx-1) family. 13 (Hntx-13) subfamily. As to expression, expressed by the venom gland.

It is found in the secreted. In terms of biological role, inhibitor of voltage-gated potassium channels. It specifically inhibits Kv2.1/KCNB1 channels. In Heteroscodra maculata (Togo starburst tarantula), this protein is Kappa-theraphotoxin-Hm2a.